The following is a 640-amino-acid chain: Endoglucanase 2 (640 aa).

Residues 1-34 (MARGGGAAGVSMAHHLGIALVVLVFAAMAQVARG) form the signal peptide. Residue Asp93 is the Nucleophile of the active site. Active-site residues include His428, Asp480, and Glu489. The propeptide at 512–640 (RARGRLGQSL…DVWVTGYKLV (129 aa)) is removed in mature form. Asn528 carries an N-linked (GlcNAc...) asparagine glycan.

This sequence belongs to the glycosyl hydrolase 9 (cellulase E) family. Expressed in roots and flowers.

It is found in the secreted. It carries out the reaction Endohydrolysis of (1-&gt;4)-beta-D-glucosidic linkages in cellulose, lichenin and cereal beta-D-glucans.. Hydrolyzes 1,4-beta-glycosyl linkages of 1,4-beta-glucans and 1,3-1,4-beta-glucans. Possesses broad substrate specificity for hemicelluloses of type II cell walls. Substrate preference is carboxymethyl-cellulose &gt; 1,3-1,4-beta-glucan &gt; lichenan &gt; arabinoxylan &gt; phospho-swollen cellulose &gt; xylan &gt; glucomannan. May participate in lateral root development. The sequence is that of Endoglucanase 2 (GLU5) from Oryza sativa subsp. japonica (Rice).